We begin with the raw amino-acid sequence, 133 residues long: UPF0134 protein MPN_151 (133 aa).

Belongs to the UPF0134 family.

This Mycoplasma pneumoniae (strain ATCC 29342 / M129 / Subtype 1) (Mycoplasmoides pneumoniae) protein is UPF0134 protein MPN_151.